We begin with the raw amino-acid sequence, 413 residues long: Glucose-1-phosphate adenylyltransferase (413 aa).

Alpha-D-glucose 1-phosphate is bound by residues G169, 184-185 (EK), and S201.

Belongs to the bacterial/plant glucose-1-phosphate adenylyltransferase family. Homotetramer.

The catalysed reaction is alpha-D-glucose 1-phosphate + ATP + H(+) = ADP-alpha-D-glucose + diphosphate. It functions in the pathway glycan biosynthesis; glycogen biosynthesis. Involved in the biosynthesis of ADP-glucose, a building block required for the elongation reactions to produce glycogen. Catalyzes the reaction between ATP and alpha-D-glucose 1-phosphate (G1P) to produce pyrophosphate and ADP-Glc. This chain is Glucose-1-phosphate adenylyltransferase, found in Trichlorobacter lovleyi (strain ATCC BAA-1151 / DSM 17278 / SZ) (Geobacter lovleyi).